A 270-amino-acid chain; its full sequence is uncharacterized protein (270 aa).

This sequence to T.pallidum TP_0127, TP_0315 and TP_0618.

This is an uncharacterized protein from Treponema pallidum (strain Nichols).